Consider the following 179-residue polypeptide: Large ribosomal subunit protein uL5 (179 aa).

The protein belongs to the universal ribosomal protein uL5 family. In terms of assembly, part of the 50S ribosomal subunit; part of the 5S rRNA/L5/L18/L25 subcomplex. Contacts the 5S rRNA and the P site tRNA. Forms a bridge to the 30S subunit in the 70S ribosome.

This is one of the proteins that bind and probably mediate the attachment of the 5S RNA into the large ribosomal subunit, where it forms part of the central protuberance. In the 70S ribosome it contacts protein S13 of the 30S subunit (bridge B1b), connecting the 2 subunits; this bridge is implicated in subunit movement. Contacts the P site tRNA; the 5S rRNA and some of its associated proteins might help stabilize positioning of ribosome-bound tRNAs. This is Large ribosomal subunit protein uL5 from Alkaliphilus metalliredigens (strain QYMF).